Consider the following 421-residue polypeptide: UDP-N-acetylglucosamine 1-carboxyvinyltransferase (421 aa).

22 to 23 (KN) serves as a coordination point for phosphoenolpyruvate. Arg-93 contacts UDP-N-acetyl-alpha-D-glucosamine. Cys-117 functions as the Proton donor in the catalytic mechanism. Residue Cys-117 is modified to 2-(S-cysteinyl)pyruvic acid O-phosphothioketal. UDP-N-acetyl-alpha-D-glucosamine-binding positions include 122–126 (RPVDL), Asp-308, and Ile-330.

This sequence belongs to the EPSP synthase family. MurA subfamily.

The protein localises to the cytoplasm. The catalysed reaction is phosphoenolpyruvate + UDP-N-acetyl-alpha-D-glucosamine = UDP-N-acetyl-3-O-(1-carboxyvinyl)-alpha-D-glucosamine + phosphate. Its pathway is cell wall biogenesis; peptidoglycan biosynthesis. Functionally, cell wall formation. Adds enolpyruvyl to UDP-N-acetylglucosamine. In Pseudomonas fluorescens (strain SBW25), this protein is UDP-N-acetylglucosamine 1-carboxyvinyltransferase.